The sequence spans 126 residues: uncharacterized protein (126 aa).

3 helical membrane-spanning segments follow: residues 4 to 24 (LIIAGILLLIKAMIFCIVNIL), 42 to 62 (AITIISSSVLYFLLSYYIINP), and 64 to 84 (ISASIIFDDCFSIFMLSSYTV).

It is found in the membrane. This is an uncharacterized protein from Saccharomyces cerevisiae (strain ATCC 204508 / S288c) (Baker's yeast).